The sequence spans 226 residues: Probable thiol methyltransferase 2 (226 aa).

Positions 29, 33, 40, and 67 each coordinate S-adenosyl-L-methionine. Phosphoserine is present on S79. S-adenosyl-L-methionine-binding positions include D88, 116 to 117 (DF), and Y132.

The protein belongs to the class I-like SAM-binding methyltransferase superfamily. TPMT family.

It catalyses the reaction a thiol + S-adenosyl-L-methionine = a methyl thioether + S-adenosyl-L-homocysteine + H(+). S-adenosyl-L-methionine-dependent methyltransferase. The protein is Probable thiol methyltransferase 2 (HOL3) of Arabidopsis thaliana (Mouse-ear cress).